Consider the following 103-residue polypeptide: Flagellar hook-basal body complex protein FliE (103 aa).

This sequence belongs to the FliE family.

Its subcellular location is the bacterial flagellum basal body. The protein is Flagellar hook-basal body complex protein FliE of Cronobacter sakazakii (strain ATCC BAA-894) (Enterobacter sakazakii).